The primary structure comprises 168 residues: uncharacterized protein (168 aa).

An N-terminal signal peptide occupies residues 1 to 21 (MVYEVLAVVSGGLLGFGVTWA).

This is an uncharacterized protein from Archaeoglobus fulgidus (strain ATCC 49558 / DSM 4304 / JCM 9628 / NBRC 100126 / VC-16).